We begin with the raw amino-acid sequence, 644 residues long: Core protein VP4 (644 aa).

Belongs to the orbivirus VP4 family.

It is found in the virion. The VP4 protein is one of the five proteins (with VP1, VP3, VP6 and VP7) which form the inner capsid of the virus. The protein is Core protein VP4 (Segment-4) of Bluetongue virus 13 (isolate USA) (BTV 13).